A 614-amino-acid chain; its full sequence is DNA mismatch repair protein MutL (614 aa).

This sequence belongs to the DNA mismatch repair MutL/HexB family.

This protein is involved in the repair of mismatches in DNA. It is required for dam-dependent methyl-directed DNA mismatch repair. May act as a 'molecular matchmaker', a protein that promotes the formation of a stable complex between two or more DNA-binding proteins in an ATP-dependent manner without itself being part of a final effector complex. In Thermoanaerobacter pseudethanolicus (strain ATCC 33223 / 39E) (Clostridium thermohydrosulfuricum), this protein is DNA mismatch repair protein MutL.